A 314-amino-acid polypeptide reads, in one-letter code: tRNA dimethylallyltransferase 1 (314 aa).

17–24 (GPTAAGKT) contacts ATP. 19 to 24 (TAAGKT) lines the substrate pocket. Residues 42-45 (DSRQ) are interaction with substrate tRNA.

Belongs to the IPP transferase family. As to quaternary structure, monomer. Mg(2+) serves as cofactor.

It catalyses the reaction adenosine(37) in tRNA + dimethylallyl diphosphate = N(6)-dimethylallyladenosine(37) in tRNA + diphosphate. Its function is as follows. Catalyzes the transfer of a dimethylallyl group onto the adenine at position 37 in tRNAs that read codons beginning with uridine, leading to the formation of N6-(dimethylallyl)adenosine (i(6)A). This Syntrophotalea carbinolica (strain DSM 2380 / NBRC 103641 / GraBd1) (Pelobacter carbinolicus) protein is tRNA dimethylallyltransferase 1.